The following is a 125-amino-acid chain: Transposase for transposon Tn554 (125 aa).

One of three proteins encoded by transposon Tn554 required for its transposition. This chain is Transposase for transposon Tn554 (tnpC1), found in Staphylococcus aureus (strain Mu50 / ATCC 700699).